The sequence spans 709 residues: Phosphomethylpyrimidine synthase (709 aa).

A compositionally biased stretch (polar residues) spans 1–13; the sequence is MNIRSNPDTTLPA. 2 disordered regions span residues 1–21 and 125–168; these read MNIRSNPDTTLPAVTTGPLPS and DAPA…GREQ. Substrate contacts are provided by residues asparagine 274, methionine 303, tyrosine 332, histidine 368, 388–390, 429–432, and glutamate 468; these read SRG and DGLR. Residue histidine 472 coordinates Zn(2+). Tyrosine 495 lines the substrate pocket. A Zn(2+)-binding site is contributed by histidine 536. Residues cysteine 616, cysteine 619, and cysteine 624 each contribute to the [4Fe-4S] cluster site.

This sequence belongs to the ThiC family. In terms of assembly, homodimer. [4Fe-4S] cluster is required as a cofactor.

The enzyme catalyses 5-amino-1-(5-phospho-beta-D-ribosyl)imidazole + S-adenosyl-L-methionine = 4-amino-2-methyl-5-(phosphooxymethyl)pyrimidine + CO + 5'-deoxyadenosine + formate + L-methionine + 3 H(+). It functions in the pathway cofactor biosynthesis; thiamine diphosphate biosynthesis. Catalyzes the synthesis of the hydroxymethylpyrimidine phosphate (HMP-P) moiety of thiamine from aminoimidazole ribotide (AIR) in a radical S-adenosyl-L-methionine (SAM)-dependent reaction. The protein is Phosphomethylpyrimidine synthase of Rhodopseudomonas palustris (strain BisB18).